A 192-amino-acid chain; its full sequence is Ion-translocating oxidoreductase complex subunit B (192 aa).

A hydrophobic region spans residues 1–26 (MNAIWIAVAAVSLLGLAFGAILGYAS). A 4Fe-4S domain is found at 32-91 (EDDPVVEKIDEILPQSQCGQCGYPGCRPYAEAISCNGEKINRCAPGGEAVMLKIAELLNV). [4Fe-4S] cluster contacts are provided by Cys49, Cys52, Cys57, Cys74, Cys117, Cys120, Cys123, Cys127, Cys147, Cys150, Cys153, and Cys157. 4Fe-4S ferredoxin-type domains follow at residues 108-137 (MVAFIDENNCIGCTKCIQACPVDAIVGATR) and 138-167 (AMHTVMSDLCTGCNLCVDPCPTHCISLQPV).

It belongs to the 4Fe4S bacterial-type ferredoxin family. RnfB subfamily. In terms of assembly, the complex is composed of six subunits: RsxA, RsxB, RsxC, RsxD, RsxE and RsxG. [4Fe-4S] cluster serves as cofactor.

The protein localises to the cell inner membrane. Part of a membrane-bound complex that couples electron transfer with translocation of ions across the membrane. Required to maintain the reduced state of SoxR. In Escherichia coli O17:K52:H18 (strain UMN026 / ExPEC), this protein is Ion-translocating oxidoreductase complex subunit B.